The primary structure comprises 361 residues: Putative F-box protein At1g33010 (361 aa).

Positions 4-50 constitute an F-box domain; sequence GNTLDSIPTDLILEIFSRLSAKSVGRLRCLSKLWRKGEWFFFSSLQP. The segment at 308 to 339 is disordered; sequence SIRPTEQKHKPTSTETSMSRKDHQVRTIDQPQ.

This Arabidopsis thaliana (Mouse-ear cress) protein is Putative F-box protein At1g33010.